A 336-amino-acid polypeptide reads, in one-letter code: MLSFIARRLGLLIPTFFGVTLLTFALIRLIPGDPVEVMMGERRVDPQMHAEALHRLGLDKPLYQQYLDYVGNLAQGNLGESLTTREGVWHEFLTLFPATLELSLAAMLFAGTFGLLAGVIAALKRGSLFDHGVMTVSLAGYSMPIFWWGLILIMLFSVSLGWTPVSGRLDLLYDIEPKTGFMLIDTLLSDEQGSFLDAVRHLILPAIVLGTIPLAVIARMTRSAMLEVLREDYVRTARAKGLSPARVVFVHALRNALIPVLTVFGLQVGTLLAGAVLTETIFSWPGIGKWLIDAISRRDYPVVQNGILLVATLVILVNFVVDILYGLANPRIRHQR.

6 helical membrane-spanning segments follow: residues 10 to 30 (GLLI…IRLI), 102 to 122 (LSLA…VIAA), 145 to 165 (IFWW…WTPV), 198 to 218 (AVRH…AVIA), 257 to 277 (LIPV…GAVL), and 307 to 327 (ILLV…LYGL). The region spanning 96–325 (FPATLELSLA…LVNFVVDILY (230 aa)) is the ABC transmembrane type-1 domain.

This sequence belongs to the binding-protein-dependent transport system permease family. OppBC subfamily. In terms of assembly, the complex is composed of two ATP-binding proteins (DppD and DppF), two transmembrane proteins (DppB and DppC) and a solute-binding protein (DppA1-A5). Five orthologous SBPs (DppA1-A5) are present in P.aeruginosa, which increases the substrate specificity of the DppBCDF transporter.

The protein localises to the cell inner membrane. In terms of biological role, part of the ABC transporter DppABCDF involved in the uptake of various di/tripeptides. Is also involved in the uptake of phaseolotoxin, a toxic tripeptide inhibiting the enzyme ornithine carbamoyltransferase. Responsible for the translocation of the substrate across the membrane. The chain is Di/tripeptide transport system permease protein DppB from Pseudomonas aeruginosa (strain UCBPP-PA14).